An 856-amino-acid chain; its full sequence is TPR repeat-containing protein TP_0123 (856 aa).

3 TPR repeats span residues 107–140 (YAAV…VADD), 523–556 (YRTF…AEQL), and 603–636 (TVSL…ALQY).

This chain is TPR repeat-containing protein TP_0123, found in Treponema pallidum (strain Nichols).